The primary structure comprises 369 residues: Phospho-N-acetylmuramoyl-pentapeptide-transferase (369 aa).

10 consecutive transmembrane segments (helical) span residues 30–50, 74–94, 97–117, 136–156, 177–197, 208–228, 244–264, 272–292, 297–317, and 346–366; these read LAIF…IRWM, GTPT…TLLW, LSNP…LLGF, IRLA…IVFA, YFVD…VGAA, GLAT…AYLV, GVGE…GFLW, IFMG…VAVA, IVLA…IIQV, and TVVI…LATL.

This sequence belongs to the glycosyltransferase 4 family. MraY subfamily. Requires Mg(2+) as cofactor.

It localises to the cell inner membrane. It carries out the reaction UDP-N-acetyl-alpha-D-muramoyl-L-alanyl-gamma-D-glutamyl-meso-2,6-diaminopimeloyl-D-alanyl-D-alanine + di-trans,octa-cis-undecaprenyl phosphate = di-trans,octa-cis-undecaprenyl diphospho-N-acetyl-alpha-D-muramoyl-L-alanyl-D-glutamyl-meso-2,6-diaminopimeloyl-D-alanyl-D-alanine + UMP. It functions in the pathway cell wall biogenesis; peptidoglycan biosynthesis. Catalyzes the initial step of the lipid cycle reactions in the biosynthesis of the cell wall peptidoglycan: transfers peptidoglycan precursor phospho-MurNAc-pentapeptide from UDP-MurNAc-pentapeptide onto the lipid carrier undecaprenyl phosphate, yielding undecaprenyl-pyrophosphoryl-MurNAc-pentapeptide, known as lipid I. This chain is Phospho-N-acetylmuramoyl-pentapeptide-transferase, found in Phenylobacterium zucineum (strain HLK1).